Here is a 1755-residue protein sequence, read N- to C-terminus: Transposon Ty1-ER2 Gag-Pol polyprotein (1755 aa).

3 stretches are compositionally biased toward polar residues: residues 1–10 (MESQQLSNYP), 48–60 (TKANSQQTTTPAS), and 127–152 (QSQFPQYPSSVGTPLSTPSPESGNTF). Disordered regions lie at residues 1 to 93 (MESQ…MMTQ), 126 to 173 (PQSQ…RPPP), and 352 to 421 (GSRN…SKST). Residues 153–165 (TDSSSADSDMTST) are compositionally biased toward low complexity. An RNA-binding region spans residues 299-401 (NNGIHINNKV…NSKSKTARAH (103 aa)). Positions 402–418 (NVSTSNNSPSTDNDSIS) are enriched in low complexity. The active-site For protease activity; shared with dimeric partner is aspartate 461. The tract at residues 583–640 (NVHTSESTRKYPYPFIHRMLAHANAQTIRYSLKNNTITYFNESDVDWSSAIDYQCPDC) is integrase-type zinc finger-like. One can recognise an Integrase catalytic domain in the interval 660–835 (NSYEPFQYLH…AGLDISTLLP (176 aa)). Mg(2+) contacts are provided by aspartate 671 and aspartate 736. Residues 958–1170 (AVSPTDSTPP…SSLGGIGDSN (213 aa)) are disordered. Positions 960-969 (SPTDSTPPST) are enriched in low complexity. Over residues 1005 to 1015 (STPQISDIEST) the composition is skewed to polar residues. Basic and acidic residues predominate over residues 1038-1053 (ESSHASKSKDFRHSDS). 2 stretches are compositionally biased toward polar residues: residues 1054-1082 (YSDNETNHTNVPISSTGGTNNKTVPQTSE) and 1095-1106 (SIDTSSSESNSL). The short motif at 1178–1212 (KKRSLEDNETEIKVSRDTWNTKNMRSLEPPRSKKR) is the Bipartite nuclear localization signal element. The Reverse transcriptase Ty1/copia-type domain maps to 1338–1476 (NNYYITQLDI…DILGLEIKYQ (139 aa)). Residues aspartate 1346, aspartate 1427, aspartate 1428, aspartate 1610, glutamate 1652, and aspartate 1685 each coordinate Mg(2+). Residues 1610–1752 (DASYGNQPYY…IKTFKLLTNK (143 aa)) form the RNase H Ty1/copia-type domain.

The capsid protein forms a homotrimer, from which the VLPs are assembled. The protease is a homodimer, whose active site consists of two apposed aspartic acid residues. Initially, virus-like particles (VLPs) are composed of the structural unprocessed proteins Gag and Gag-Pol, and also contain the host initiator methionine tRNA (tRNA(i)-Met) which serves as a primer for minus-strand DNA synthesis, and a dimer of genomic Ty RNA. Processing of the polyproteins occurs within the particle and proceeds by an ordered pathway, called maturation. First, the protease (PR) is released by autocatalytic cleavage of the Gag-Pol polyprotein yielding capsid protein p45 and a Pol-p154 precursor protein. This cleavage is a prerequisite for subsequent processing of Pol-p154 at the remaining sites to release the mature structural and catalytic proteins. Maturation takes place prior to the RT reaction and is required to produce transposition-competent VLPs.

The protein resides in the cytoplasm. The protein localises to the nucleus. It catalyses the reaction DNA(n) + a 2'-deoxyribonucleoside 5'-triphosphate = DNA(n+1) + diphosphate. The catalysed reaction is Endonucleolytic cleavage to 5'-phosphomonoester.. Its function is as follows. Capsid protein (CA) is the structural component of the virus-like particle (VLP), forming the shell that encapsulates the retrotransposons dimeric RNA genome. The particles are assembled from trimer-clustered units and there are holes in the capsid shells that allow for the diffusion of macromolecules. CA also has nucleocapsid-like chaperone activity, promoting primer tRNA(i)-Met annealing to the multipartite primer-binding site (PBS), dimerization of Ty1 RNA and initiation of reverse transcription. In terms of biological role, the aspartyl protease (PR) mediates the proteolytic cleavages of the Gag and Gag-Pol polyproteins after assembly of the VLP. Reverse transcriptase/ribonuclease H (RT) is a multifunctional enzyme that catalyzes the conversion of the retro-elements RNA genome into dsDNA within the VLP. The enzyme displays a DNA polymerase activity that can copy either DNA or RNA templates, and a ribonuclease H (RNase H) activity that cleaves the RNA strand of RNA-DNA heteroduplexes during plus-strand synthesis and hydrolyzes RNA primers. The conversion leads to a linear dsDNA copy of the retrotransposon that includes long terminal repeats (LTRs) at both ends. Functionally, integrase (IN) targets the VLP to the nucleus, where a subparticle preintegration complex (PIC) containing at least integrase and the newly synthesized dsDNA copy of the retrotransposon must transit the nuclear membrane. Once in the nucleus, integrase performs the integration of the dsDNA into the host genome. The chain is Transposon Ty1-ER2 Gag-Pol polyprotein (TY1B-ER2) from Saccharomyces cerevisiae (strain ATCC 204508 / S288c) (Baker's yeast).